A 209-amino-acid chain; its full sequence is High mobility group protein B2 (209 aa).

Lysine 3 bears the N6-acetyllysine mark. Positions 9-79 form a DNA-binding region, HMG box 1; the sequence is PRGKMSSYAF…RYDREMKNYV (71 aa). Residue cysteine 23 is modified to Cysteine sulfonic acid (-SO3H); alternate. Cysteine 23 and cysteine 45 form a disulfide bridge. Lysine 30 is modified (N6-acetyllysine). Position 35 is a phosphoserine (serine 35). Residue lysine 43 is modified to N6-acetyllysine. Residue cysteine 45 is modified to Cysteine sulfonic acid (-SO3H); alternate. Over residues 52–76 the composition is skewed to basic and acidic residues; the sequence is MSAKEKSKFEDMAKSDKARYDREMK. 2 disordered regions span residues 52–150 and 162–209; these read MSAK…KAAK and YRAK…EDEE. Lysine 90 is subject to N6-acetyllysine. The HMG box 2 DNA-binding region spans 95–163; sequence PKRPPSAFFL…KYEKDIAAYR (69 aa). Phosphoserine is present on serine 100. Cysteine 106 carries the post-translational modification Cysteine sulfonic acid (-SO3H). 3 stretches are compositionally biased toward basic and acidic residues: residues 107–117, 137–150, and 162–172; these read SEHRPKIKSEH, SAKD…KAAK, and YRAKGKSEAGK. N6-acetyllysine occurs at positions 114 and 141. Residues 165 to 180 form a required for chemotactic activity region; sequence KGKSEAGKKGPGRPTG. Positions 187 to 209 are enriched in acidic residues; the sequence is PEDEEEEEEEEDEDEEEEDEDEE.

Belongs to the HMGB family. As to quaternary structure, interacts with POU2F2, POU2F1 and POU3F1. Component of the RAG complex composed of core components RAG1 and RAG2, and associated component HMGB1 or HMGB2. Component of the SET complex, composed of at least ANP32A, APEX1, HMGB2, NME1, SET and TREX1. Directly interacts with SET. Interacts with LEF1. In terms of processing, reduction/oxidation of cysteine residues Cys-23, Cys-45 and Cys-106 and a possible intramolecular disulfide bond involving Cys-23 and Cys-45 give rise to different redox forms with specific functional activities in various cellular compartments: 1- fully reduced HMGB2 (HMGB2C23hC45hC106h), 2- disulfide HMGB2 (HMGB2C23-C45C106h) and 3- sulfonyl HMGB2 (HMGB2C23soC45soC106so).

The protein resides in the nucleus. The protein localises to the chromosome. It localises to the cytoplasm. It is found in the secreted. Multifunctional protein with various roles in different cellular compartments. May act in a redox sensitive manner. In the nucleus is an abundant chromatin-associated non-histone protein involved in transcription, chromatin remodeling and V(D)J recombination and probably other processes. Binds DNA with a preference to non-canonical DNA structures such as single-stranded DNA. Can bent DNA and enhance DNA flexibility by looping thus providing a mechanism to promote activities on various gene promoters by enhancing transcription factor binding and/or bringing distant regulatory sequences into close proximity. Involved in V(D)J recombination by acting as a cofactor of the RAG complex: acts by stimulating cleavage and RAG protein binding at the 23 bp spacer of conserved recombination signal sequences (RSS). Proposed to be involved in the innate immune response to nucleic acids by acting as a cytoplasmic promiscuous immunogenic DNA/RNA sensor which cooperates with subsequent discriminative sensing by specific pattern recognition receptors. In the extracellular compartment acts as a chemokine. Promotes proliferation and migration of endothelial cells implicating AGER/RAGE. Has antimicrobial activity in gastrointestinal epithelial tissues. Involved in inflammatory response to antigenic stimulus coupled with pro-inflammatory activity. May play a role in germ cell differentiation. Involved in modulation of neurogenesis probably by regulation of neural stem proliferation. Involved in articular cartilage surface maintenance implicating LEF1 and the Wnt/beta-catenin pathway. The chain is High mobility group protein B2 (HMGB2) from Bos taurus (Bovine).